The primary structure comprises 368 residues: Probable leucine aminopeptidase ARB_03492 (368 aa).

A signal peptide spans 1 to 18 (MKVSAIAAVAALAAVAVA). A glycan (N-linked (GlcNAc...) asparagine) is linked at Asn92. Zn(2+)-binding residues include His172 and Asp191. Asn192 and Asn216 each carry an N-linked (GlcNAc...) asparagine glycan. Zn(2+)-binding residues include Glu230 and Asp257. The cysteines at positions 301 and 305 are disulfide-linked. His334 is a Zn(2+) binding site.

It belongs to the peptidase M28 family. M28E subfamily. Monomer. Requires Zn(2+) as cofactor.

Its subcellular location is the secreted. Its function is as follows. Probable extracellular aminopeptidase which contributes to pathogenicity. This Arthroderma benhamiae (strain ATCC MYA-4681 / CBS 112371) (Trichophyton mentagrophytes) protein is Probable leucine aminopeptidase ARB_03492.